A 519-amino-acid chain; its full sequence is MMSEHDLADVVQIAVEDLSPDHPVVLENHVVTDEDEPALKRQRLEINCQDPSIKTICLRLDSIEAKLQALEATCKSLEEKLDLVTNKQHSPIQVPMVAGSPLGATQTCNKVRCVVPQTTVILNNDRQNAIVAKMEDPLSNRAPDSLENVISNAVPGRRQNTIVVKVPGQEDSHHEDGESGSEASDSVSSCGQAGSQSIGSNVTLITLNSEEDYPNGTWLGDENNPEMRVRCAIIPSDMLHISTNCRTAEKMALTLLDYLFHREVQAVSNLSGQGKHGKKQLDPLTIYGIRCHLFYKFGITESDWYRIKQSIDSKCRTAWRRKQRGQSLAVKSFSRRTPNSSSYCPSEPMMSTPPPASELPQPQPQPQALHYALANAQQVQIHQIGEDGQVQVGHLHIAQVPQGEQVQITQDSEGNLQIHHVGQDGQLLEATRIPCLLAPSVFKASSGQVLQGAQLIAVASSDPAAAGVDGSPLQGSDIQVQYVQLAPVSDHTAGAQTAEALQPTLQPEMQLEHGAIQIQ.

Phosphoserine is present on residues Ser19, Ser90, and Ser100. The stretch at 53-90 (IKTICLRLDSIEAKLQALEATCKSLEEKLDLVTNKQHS) forms a coiled coil. A Glycyl lysine isopeptide (Lys-Gly) (interchain with G-Cter in SUMO2) cross-link involves residue Lys133. Residues 152–342 (NAVPGRRQNT…FSRRTPNSSS (191 aa)) form an interaction with CUX1 and HDAC1 region. Positions 168–177 (GQEDSHHEDG) are enriched in basic and acidic residues. The tract at residues 168–196 (GQEDSHHEDGESGSEASDSVSSCGQAGSQ) is disordered. The segment covering 180 to 189 (GSEASDSVSS) has biased composition (low complexity). The BEN domain occupies 226–322 (EMRVRCAIIP…SKCRTAWRRK (97 aa)). N6-acetyllysine is present on Lys275. The segment at 327-364 (SLAVKSFSRRTPNSSSYCPSEPMMSTPPPASELPQPQP) is disordered. Over residues 335 to 344 (RRTPNSSSYC) the composition is skewed to polar residues. Phosphothreonine is present on residues Thr337 and Thr352. Positions 342–393 (SYCPSEPMMSTPPPASELPQPQPQPQALHYALANAQQVQIHQIGEDGQVQVG) are DNA-binding. The span at 351–364 (STPPPASELPQPQP) shows a compositional bias: pro residues.

It belongs to the BANP/SMAR1 family. As to quaternary structure, part of a corepressor complex containing BANP, HDAC1, SIN3A, SIN3B, RBL1 and RBL2. Forms a trimeric complex in the nucleus consisting of BANP, HDAC6 and KHDRBS1/SAM68; HDAC6 keeps KHDRBS1 in a deacetylated state which inhibits the inclusion of CD44 alternate exons. The complex is disrupted by MAPK1/MAPK3-mediated phosphorylation of BANP which results in BANP export to the cytoplasm. This facilitates acetylation of KHDRBS1 and CD44 variant exon inclusion. Interacts with TP53. Interacts with CUX1/CDP. Interacts with HDAC1. In terms of processing, MAPK1/MAPK3-mediated phosphorylation at Thr-337 and Thr-352 results in export to the cytoplasm. In terms of tissue distribution, down-regulated in breast cancer cell lines.

It is found in the nucleus. The protein localises to the nucleus speckle. The protein resides in the cytoplasm. Functionally, controls V(D)J recombination during T-cell development by repressing T-cell receptor (TCR) beta enhancer function. Binds to scaffold/matrix attachment region beta (S/MARbeta), an ATC-rich DNA sequence located upstream of the TCR beta enhancer. Represses cyclin D1 transcription by recruiting HDAC1 to its promoter, thereby diminishing H3K9ac, H3S10ph and H4K8ac levels. Promotes TP53 activation, which causes cell cycle arrest. Plays a role in the regulation of alternative splicing. Binds to CD44 pre-mRNA and negatively regulates the inclusion of CD44 proximal variable exons v2-v6 but has no effect on distal variable exons v7-v10. The chain is Protein BANP (BANP) from Homo sapiens (Human).